The chain runs to 485 residues: Glutamyl-tRNA(Gln) amidotransferase subunit A 1 (485 aa).

Active-site charge relay system residues include Lys-79 and Ser-154. Ser-178 (acyl-ester intermediate) is an active-site residue.

This sequence belongs to the amidase family. GatA subfamily. In terms of assembly, heterotrimer of A, B and C subunits.

The catalysed reaction is L-glutamyl-tRNA(Gln) + L-glutamine + ATP + H2O = L-glutaminyl-tRNA(Gln) + L-glutamate + ADP + phosphate + H(+). Its function is as follows. Allows the formation of correctly charged Gln-tRNA(Gln) through the transamidation of misacylated Glu-tRNA(Gln) in organisms which lack glutaminyl-tRNA synthetase. The reaction takes place in the presence of glutamine and ATP through an activated gamma-phospho-Glu-tRNA(Gln). The protein is Glutamyl-tRNA(Gln) amidotransferase subunit A 1 (gatA1) of Clostridium acetobutylicum (strain ATCC 824 / DSM 792 / JCM 1419 / IAM 19013 / LMG 5710 / NBRC 13948 / NRRL B-527 / VKM B-1787 / 2291 / W).